The primary structure comprises 532 residues: Membrane protein insertase YidC (532 aa).

Helical transmembrane passes span 6–26 (IVLA…FAEY), 317–337 (AIDF…LTFF), 342–362 (GNWG…FWPL), 411–431 (GGCL…QALL), 451–473 (VWLA…GASM), and 496–516 (PIIF…YWLF).

The protein belongs to the OXA1/ALB3/YidC family. Type 1 subfamily. In terms of assembly, interacts with the Sec translocase complex via SecD. Specifically interacts with transmembrane segments of nascent integral membrane proteins during membrane integration.

It is found in the cell membrane. Functionally, required for the insertion and/or proper folding and/or complex formation of integral membrane proteins into the membrane. Involved in integration of membrane proteins that insert both dependently and independently of the Sec translocase complex, as well as at least some lipoproteins. Aids folding of multispanning membrane proteins. This Lawsonia intracellularis (strain PHE/MN1-00) protein is Membrane protein insertase YidC.